Consider the following 87-residue polypeptide: UPF0250 protein ESA_02696 (87 aa).

Belongs to the UPF0250 family.

This Cronobacter sakazakii (strain ATCC BAA-894) (Enterobacter sakazakii) protein is UPF0250 protein ESA_02696.